The following is a 706-amino-acid chain: K(+)-insensitive pyrophosphate-energized proton pump (706 aa).

Transmembrane regions (helical) follow at residues methionine 1–alanine 21, isoleucine 62–isoleucine 82, glycine 83–valine 103, glycine 128–tyrosine 148, and valine 164–phenylalanine 184. Lysine 186 lines the substrate pocket. Mg(2+) contacts are provided by aspartate 189, aspartate 193, asparagine 216, and aspartate 219. Transmembrane regions (helical) follow at residues leucine 231–alanine 251, threonine 261–valine 281, isoleucine 298–phenylalanine 318, glycine 328–isoleucine 348, isoleucine 376–leucine 398, and alanine 412–valine 432. Aspartate 434 contributes to the Mg(2+) binding site. Helical transmembrane passes span alanine 465–alanine 485, tyrosine 516–methionine 536, isoleucine 585–isoleucine 605, and alanine 616–isoleucine 636. 3 residues coordinate Ca(2+): aspartate 646, aspartate 672, and aspartate 676. Lysine 679 provides a ligand contact to substrate. A helical membrane pass occupies residues alanine 685–alanine 705.

The protein belongs to the H(+)-translocating pyrophosphatase (TC 3.A.10) family. K(+)-insensitive subfamily. In terms of assembly, homodimer. The cofactor is Mg(2+).

The protein localises to the cell inner membrane. It catalyses the reaction diphosphate + H2O + H(+)(in) = 2 phosphate + 2 H(+)(out). Functionally, proton pump that utilizes the energy of pyrophosphate hydrolysis as the driving force for proton movement across the membrane. Generates a proton motive force. This chain is K(+)-insensitive pyrophosphate-energized proton pump, found in Bradyrhizobium diazoefficiens (strain JCM 10833 / BCRC 13528 / IAM 13628 / NBRC 14792 / USDA 110).